We begin with the raw amino-acid sequence, 226 residues long: 2-C-methyl-D-erythritol 4-phosphate cytidylyltransferase (226 aa).

Belongs to the IspD/TarI cytidylyltransferase family. IspD subfamily.

The enzyme catalyses 2-C-methyl-D-erythritol 4-phosphate + CTP + H(+) = 4-CDP-2-C-methyl-D-erythritol + diphosphate. The protein operates within isoprenoid biosynthesis; isopentenyl diphosphate biosynthesis via DXP pathway; isopentenyl diphosphate from 1-deoxy-D-xylulose 5-phosphate: step 2/6. In terms of biological role, catalyzes the formation of 4-diphosphocytidyl-2-C-methyl-D-erythritol from CTP and 2-C-methyl-D-erythritol 4-phosphate (MEP). The chain is 2-C-methyl-D-erythritol 4-phosphate cytidylyltransferase from Bacillus thuringiensis (strain Al Hakam).